The sequence spans 185 residues: dCTP deaminase (185 aa).

Residues 107–112 (KSTYAR), 131–133 (TLE), Q152, Y166, and Q176 contribute to the dCTP site. Residue E133 is the Proton donor/acceptor of the active site.

This sequence belongs to the dCTP deaminase family. Homotrimer.

The enzyme catalyses dCTP + H2O + H(+) = dUTP + NH4(+). The protein operates within pyrimidine metabolism; dUMP biosynthesis; dUMP from dCTP (dUTP route): step 1/2. Catalyzes the deamination of dCTP to dUTP. The polypeptide is dCTP deaminase (Neorickettsia sennetsu (strain ATCC VR-367 / Miyayama) (Ehrlichia sennetsu)).